The primary structure comprises 82 residues: Sulfur carrier protein TusA (82 aa).

C19 serves as the catalytic Cysteine persulfide intermediate.

Belongs to the sulfur carrier protein TusA family. As to quaternary structure, interacts with IscS.

Its subcellular location is the cytoplasm. The protein operates within tRNA modification. Functionally, sulfur carrier protein involved in sulfur trafficking in the cell. Part of a sulfur-relay system required for 2-thiolation during synthesis of 2-thiouridine of the modified wobble base 5-methylaminomethyl-2-thiouridine (mnm(5)s(2)U) in tRNA. Interacts with IscS and stimulates its cysteine desulfurase activity. Accepts an activated sulfur from IscS, which is then transferred to TusD, and thus determines the direction of sulfur flow from IscS to 2-thiouridine formation. Also appears to be involved in sulfur transfer for the biosynthesis of molybdopterin. In Edwardsiella ictaluri (strain 93-146), this protein is Sulfur carrier protein TusA.